We begin with the raw amino-acid sequence, 140 residues long: Peptide methionine sulfoxide reductase MsrB (140 aa).

In terms of domain architecture, MsrB spans 10–132 (EEDWKSVLTP…NSVSLGFTKE (123 aa)). Zn(2+) contacts are provided by Cys49, Cys52, Cys98, and Cys101. Cys121 acts as the Nucleophile in catalysis.

It belongs to the MsrB Met sulfoxide reductase family. The cofactor is Zn(2+).

It catalyses the reaction L-methionyl-[protein] + [thioredoxin]-disulfide + H2O = L-methionyl-(R)-S-oxide-[protein] + [thioredoxin]-dithiol. This Methanosarcina mazei (strain ATCC BAA-159 / DSM 3647 / Goe1 / Go1 / JCM 11833 / OCM 88) (Methanosarcina frisia) protein is Peptide methionine sulfoxide reductase MsrB.